A 239-amino-acid polypeptide reads, in one-letter code: MVRVTEVVHTKKHHKHKKIPKLISSRNLFKAVEKNNIAGTKFLLEHGISPNATHPNDSIEYKSLHWIISKNGELIEIEVGIDTPLHIAANNGYTTVVKILLENGAFINARDSFGFTPLHSAIISSYKLSSIKLLLEYGTSLTLEIIDGYYRGKTPVGLLKKIGSKKDKKVVALRALLELEKLYRNKELDKIVKKTYIKEPHIKDFIKWKIEAEIPKFIKSNISFLNKHIKKNYLLLISF.

3 ANK repeats span residues 23–52 (ISSR…SPNA), 80–109 (GIDT…FINA), and 113–143 (FGFT…SLTL).

In Rickettsia bellii (strain RML369-C), this protein is Putative ankyrin repeat protein RBE_0489.